The following is a 688-amino-acid chain: MSKDFLLEIGLEEMPAKYVTSSVLQLEKRVTDWLKDNQIEFKEIKTYSTPRRLTVLVEEMAEEQANRVEEAKGPAKKIALDDEGNWSKAALGFAKSQKVAPEDLTFREIKGVEYIYIKKEVIGEKTTALLPSLEKVVTSMTFPVSMHWGSNDLRYIRPIKWLIAMFGEEIIPFEITGVSTSNTSRGHRFLGKTATINQPSDYPNALLEQFVVVNASERKQAIVEQLRELETMENWQIREDDDLLEEVTNLVEYPTVLAGNFEKEYLELPEEVLITTMKEHQRYFPVFSQEGELLPHFVTVRNGNHENLDTVARGNEKVLRARLSDADFFYQEDLKITIDEAVAKLQNIVFHEKLGTLTEKMKRVQKVALMLADYLNWQEEDKQDIIRLTNIYKFDLVTNIVGEFPELQGLMGEKYALLQGEKPAIATAIREHYLPSSAEGDLPQTDLGSLIAIADKLETLIGFFCVNIAPTGSADPFGLRRSAFGAVRIIQANGWDIPMLEVVSRIVDMERAEGATELPSSDVIKEVQTFLKNRLRVILQGHHIRHDIIDAVIGGDPNMIPQLIDRAQILNKHADAEWFRPTIEALTRVVNISKKYEDGVEVDPSLFENEYEQALFDKLEKLKFDFAGLKIVDRLKAFADLRTTIDAYFDNTLVMTDNDELKNNRLALLFELASFIKEFAQMDEINVK.

The protein belongs to the class-II aminoacyl-tRNA synthetase family. As to quaternary structure, tetramer of two alpha and two beta subunits.

Its subcellular location is the cytoplasm. The enzyme catalyses tRNA(Gly) + glycine + ATP = glycyl-tRNA(Gly) + AMP + diphosphate. This is Glycine--tRNA ligase beta subunit from Listeria monocytogenes serotype 4b (strain CLIP80459).